We begin with the raw amino-acid sequence, 83 residues long: Cytotoxin A5 (83 aa).

Residues 1–21 form the signal peptide; that stretch reads MKTLLLTMVVVTIVCLDLGYT. 4 cysteine pairs are disulfide-bonded: cysteine 24/cysteine 43, cysteine 36/cysteine 61, cysteine 65/cysteine 76, and cysteine 77/cysteine 82.

This sequence belongs to the three-finger toxin family. Short-chain subfamily. Orphan group XV sub-subfamily. In terms of tissue distribution, expressed by the venom gland.

The protein localises to the secreted. Its subcellular location is the target cell membrane. Its function is as follows. Non-cytotoxic protein that does not show lytic and hemolytic activities, but can induce aggregation and fusion of sphingomyelin vesicles. It binds to integrin alpha-V/beta-3 (ITGAV/ITGB3) with high affinity, and it inhibits osteoclast differentiation and bone resorption in mice, probably due to binding to integrin alpha-V/beta-3. In Naja atra (Chinese cobra), this protein is Cytotoxin A5.